Consider the following 786-residue polypeptide: Ciliated left-right organizer ZP-N domains-containing protein (786 aa).

A signal peptide spans 1–18; the sequence is MWGSVAVVWAICLACIQP.

Expressed specifically by cells of the ciliated left-right organizer.

Plays a role in left-right patterning process. The sequence is that of Ciliated left-right organizer ZP-N domains-containing protein (Ciroz) from Mus musculus (Mouse).